The chain runs to 236 residues: MDSTILIKLSGESLANKQKSLAIDYELVRQIGSQLKEIQNLGHKILIVIGGGNFWRGTSAAKNGINRNTADYIGMLGTVMNGLALDSVFRDLGIKTRVLSSMSLDPRICEYFVREKAMKYLEDNNVLIFVGGTGRPFFTTDSAATLFASEMGANIILVGKNNVNGIFDSDPKINPNALRYDKITYNQVIEKNLKVMDSTAFSMARDNKIKLLIFDIKEKNSISKLIKRQIKHTEVY.

8–11 (KLSG) contributes to the ATP binding site. Glycine 51 lines the UMP pocket. Glycine 52 and arginine 56 together coordinate ATP. Residues aspartate 71 and 133 to 140 (TGRPFFTT) contribute to the UMP site. ATP contacts are provided by asparagine 161, phenylalanine 167, and aspartate 170.

It belongs to the UMP kinase family. Homohexamer.

The protein localises to the cytoplasm. It catalyses the reaction UMP + ATP = UDP + ADP. It participates in pyrimidine metabolism; CTP biosynthesis via de novo pathway; UDP from UMP (UMPK route): step 1/1. With respect to regulation, inhibited by UTP. Catalyzes the reversible phosphorylation of UMP to UDP. The chain is Uridylate kinase from Mesomycoplasma hyopneumoniae (strain 232) (Mycoplasma hyopneumoniae).